Here is a 92-residue protein sequence, read N- to C-terminus: Small ribosomal subunit protein uS19c (92 aa).

It belongs to the universal ribosomal protein uS19 family.

Its subcellular location is the plastid. It is found in the chloroplast. Its function is as follows. Protein S19 forms a complex with S13 that binds strongly to the 16S ribosomal RNA. The protein is Small ribosomal subunit protein uS19c of Rhodomonas salina (Cryptomonas salina).